Consider the following 154-residue polypeptide: Putative protein heh-1 (154 aa).

The first 15 residues, 1–15 (MKTVIFLALLGLAAA), serve as a signal peptide directing secretion. 2 disulfide bridges follow: Cys39/Cys50 and Cys97/Cys103.

The protein belongs to the NPC2 family.

The protein resides in the secreted. This is Putative protein heh-1 (heh-1) from Caenorhabditis elegans.